A 767-amino-acid polypeptide reads, in one-letter code: Probable NADP-dependent malic enzyme (767 aa).

A malic enzyme region spans residues 1-430 (MDEMNKINYT…QLGSRLNPTA (430 aa)). Residue tyrosine 42 is the Proton donor of the active site. Residue lysine 97 is the Proton acceptor of the active site. Residues glutamate 139, aspartate 140, and aspartate 165 each contribute to the a divalent metal cation site. NADP(+) contacts are provided by residues 198–201 (AGAA), asparagine 290, and asparagine 322. The interval 431–767 (NYMNFLAEKI…FACVEAIKEV (337 aa)) is phosphate acetyltransferase.

This sequence in the N-terminal section; belongs to the malic enzymes family. In the C-terminal section; belongs to the phosphate acetyltransferase and butyryltransferase family. Mg(2+) serves as cofactor. Mn(2+) is required as a cofactor.

It catalyses the reaction (S)-malate + NADP(+) = pyruvate + CO2 + NADPH. It carries out the reaction oxaloacetate + H(+) = pyruvate + CO2. The chain is Probable NADP-dependent malic enzyme from Rickettsia prowazekii (strain Madrid E).